A 196-amino-acid polypeptide reads, in one-letter code: FMN-dependent NADH:quinone oxidoreductase (196 aa).

Ser10 lines the FMN pocket.

The protein belongs to the azoreductase type 1 family. Homodimer. FMN serves as cofactor.

The enzyme catalyses 2 a quinone + NADH + H(+) = 2 a 1,4-benzosemiquinone + NAD(+). It carries out the reaction N,N-dimethyl-1,4-phenylenediamine + anthranilate + 2 NAD(+) = 2-(4-dimethylaminophenyl)diazenylbenzoate + 2 NADH + 2 H(+). Functionally, quinone reductase that provides resistance to thiol-specific stress caused by electrophilic quinones. Its function is as follows. Also exhibits azoreductase activity. Catalyzes the reductive cleavage of the azo bond in aromatic azo compounds to the corresponding amines. In Cereibacter sphaeroides (strain ATCC 17029 / ATH 2.4.9) (Rhodobacter sphaeroides), this protein is FMN-dependent NADH:quinone oxidoreductase.